The primary structure comprises 323 residues: Lipid A biosynthesis myristoyltransferase (323 aa).

Residues 23–43 (YWGAWLGVAAMAGIALTPPKF) form a helical membrane-spanning segment. An HXXXXD motif motif is present at residues 139-144 (HGWAVD).

It belongs to the LpxL/LpxM/LpxP family. LpxM subfamily.

The protein resides in the cell inner membrane. The enzyme catalyses alpha-Kdo-(2-&gt;4)-alpha-Kdo-(2-&gt;6)-(dodecanoyl)-lipid IVA (E. coli) + tetradecanoyl-[ACP] = alpha-Kdo-(2-&gt;4)-alpha-Kdo-(2-&gt;6)-lipid A (E. coli) + holo-[ACP]. It catalyses the reaction (9Z)-hexadecenoyl-(Kdo)2-lipid IVA (E. coli) + tetradecanoyl-[ACP] = ((9Z)-hexadecenoyl-tetradecanoyl)-(Kdo)2-lipid A + holo-[ACP]. It participates in glycolipid biosynthesis; KDO(2)-lipid A biosynthesis; KDO(2)-lipid A from CMP-3-deoxy-D-manno-octulosonate and lipid IV(A): step 4/4. It functions in the pathway bacterial outer membrane biogenesis; lipopolysaccharide biosynthesis. In terms of biological role, catalyzes the transfer of myristate from myristoyl-[acyl-carrier-protein] (ACP) to Kdo(2)-(lauroyl)-lipid IV(A) to form Kdo(2)-lipid A. Can probably also catalyze the transfer of myristate to Kdo(2)-(palmitoleoyl)-lipid IV(A) to form the cold-adapted Kdo(2)-lipid A. In vitro, can acylate Kdo(2)-lipid IV(A), but acylation of (KDO)2-(lauroyl)-lipid IV(A) is about 100 times faster. In vitro, can use lauroyl-ACP but displays a slight kinetic preference for myristoyl-ACP. This is Lipid A biosynthesis myristoyltransferase from Escherichia coli (strain K12).